The following is a 229-amino-acid chain: UPF0758 protein Fjoh_0413 (229 aa).

The MPN domain maps to 107 to 229 (KITSSKDAFT…YYSFVDEGIF (123 aa)). Residues His-178, His-180, and Asp-191 each contribute to the Zn(2+) site. Residues 178–191 (HNHPSGELNPSQAD) carry the JAMM motif motif.

Belongs to the UPF0758 family.

The chain is UPF0758 protein Fjoh_0413 from Flavobacterium johnsoniae (strain ATCC 17061 / DSM 2064 / JCM 8514 / BCRC 14874 / CCUG 350202 / NBRC 14942 / NCIMB 11054 / UW101) (Cytophaga johnsonae).